The sequence spans 131 residues: Profilin-3 (131 aa).

This sequence belongs to the profilin family. As to quaternary structure, occurs in many kinds of cells as a complex with monomeric actin in a 1:1 ratio.

It is found in the cytoplasm. It localises to the cytoskeleton. Binds to actin and affects the structure of the cytoskeleton. At high concentrations, profilin prevents the polymerization of actin, whereas it enhances it at low concentrations. By binding to PIP2, it inhibits the formation of IP3 and DG. This Triticum aestivum (Wheat) protein is Profilin-3 (PRO3).